Here is a 566-residue protein sequence, read N- to C-terminus: MMTHTLPSEQTRLVPGSDSSSRPKKRRISKRSKIIVSTVVCIGLLLVLVQLAFPSSFALRSASHKKKNVIFFVTDGMGPASLSMARSFNQHVNDLPIDDILTLDEHFIGSSRTRSSDSLVTDSAAGATAFACALKSYNGAIGVDPHHRPCGTVLEAAKLAGYLTGLVVTTRITDATPASFSSHVDYRWQEDLIATHQLGEYPLGRVVDLLMGGGRSHFYPQGEKASPYGHHGARKDGRDLIDEAQSNGWQYVGDRKNFDSLLKSHGENVTLPFLGLFADNDIPFEIDRDEKEYPSLKEQVKVALGALEKASNEDKDSNGFFLMVEGSRIDHAGHQNDPASQVREVLAFDEAFQYVLEFAENSDTETVLVSTSDHETGGLVTSRQVTASYPQYVWYPQVLANATHSGEFLKRKLVDFVHEHKGASSKIENFIKHEILEKDLGIYDYTDSDLETLIHLDDNANAIQDKLNDMVSFRAQIGWTTHGHSAVDVNIYAYANKKATWSYVLNNLQGNHENTEVGQFLENFLELNLNEVTDLIRDTKHTSDFDATEIASEVQHYDEYYHELTN.

Positions Met1–Thr11 are enriched in polar residues. Residues Met1–Arg27 form a disordered region. The Cytoplasmic segment spans residues Met1–Lys33. Residues Ile34–Leu59 traverse the membrane as a helical segment. Asp75 contacts Mg(2+). Asp75 serves as a coordination point for Zn(2+). Catalysis depends on Ser123, which acts as the Phosphoserine intermediate. Ser123 bears the Phosphoserine mark. Residues Asp174 and Thr176 each coordinate Mg(2+). An N-linked (GlcNAc...) asparagine glycan is attached at Asn268. Glu325 lines the Mg(2+) pocket. Residues Asp330, His334, Asp373, and His374 each contribute to the Zn(2+) site. Asn401 carries an N-linked (GlcNAc...) asparagine glycan. His484 is a Zn(2+) binding site.

The protein belongs to the alkaline phosphatase family. The cofactor is Mg(2+). Zn(2+) is required as a cofactor.

Its subcellular location is the vacuole membrane. It localises to the cytoplasm. It carries out the reaction a phosphate monoester + H2O = an alcohol + phosphate. The catalysed reaction is (2E,6E)-farnesyl diphosphate + H2O = (2E,6E)-farnesol + diphosphate. The enzyme catalyses beta-D-fructose 2,6-bisphosphate + H2O = beta-D-fructose 2-phosphate + phosphate. Functionally, phosphatase with broad substrate specificity. A truncated (soluble) version of the protein is responsible for the production of (E,E)-farnesol from (E,E)-farnesyl diphosphate. Acts as a fructose-2,6-bisphosphate 6-phosphatase. The protein is Repressible alkaline phosphatase (PHO8) of Saccharomyces cerevisiae (strain ATCC 204508 / S288c) (Baker's yeast).